Here is a 735-residue protein sequence, read N- to C-terminus: Receptor-type guanylate cyclase gcy-27 (735 aa).

Residue N11 is glycosylated (N-linked (GlcNAc...) asparagine). Residues 28 to 48 (FIICTLPVPIYFVVVAIWTIN) form a helical membrane-spanning segment. Residues 188 to 465 (ALTSRRRVFG…IENLRNAIAI (278 aa)) enclose the Protein kinase domain. Residues 538–668 (TVMFVQICDF…DTVNFASRMQ (131 aa)) form the Guanylate cyclase domain.

This sequence belongs to the adenylyl cyclase class-4/guanylyl cyclase family. As to expression, expressed bilaterally in ASK, ASI and ASJ sensory neurons.

The protein resides in the cell membrane. It catalyses the reaction GTP = 3',5'-cyclic GMP + diphosphate. Its function is as follows. Guanylate cyclase involved in the production of the second messenger cGMP. May be involved in sensitivity to quinine by regulating egl-4 activity through the production of cGMP. Promotes the calcium flux to the cytoplasm in ASJ sensory neurons upon removal of a nitric oxide (NO) stimulus and is thereby involved in the behavioral avoidance response to NO-producing organisms like P.aeruginosa. The chain is Receptor-type guanylate cyclase gcy-27 from Caenorhabditis elegans.